Reading from the N-terminus, the 772-residue chain is Phenylalanine--tRNA ligase beta subunit (772 aa).

One can recognise a tRNA-binding domain in the interval 40–158; that stretch reads IKPSTNLVFA…DHYKTPNQIF (119 aa). One can recognise a B5 domain in the interval 397–468; that stretch reads SVHNVIKNKI…KKISIQEIKP (72 aa). 4 residues coordinate Mg(2+): aspartate 446, aspartate 452, glutamate 455, and aspartate 456. One can recognise an FDX-ACB domain in the interval 691–772; it reads SMYHDVIRDI…QEVNNYLKQF (82 aa).

Belongs to the phenylalanyl-tRNA synthetase beta subunit family. Type 1 subfamily. Tetramer of two alpha and two beta subunits. It depends on Mg(2+) as a cofactor.

It is found in the cytoplasm. The catalysed reaction is tRNA(Phe) + L-phenylalanine + ATP = L-phenylalanyl-tRNA(Phe) + AMP + diphosphate + H(+). In Ureaplasma parvum serovar 3 (strain ATCC 700970), this protein is Phenylalanine--tRNA ligase beta subunit (pheT).